The chain runs to 201 residues: Small ribosomal subunit protein uS4 (201 aa).

The disordered stretch occupies residues 26–48 (LSKKNYPPGQHGNSRKRKTSEYG). Positions 92-155 (GRLDNVVFRL…KSLEVIANSL (64 aa)) constitute an S4 RNA-binding domain.

Belongs to the universal ribosomal protein uS4 family. Part of the 30S ribosomal subunit. Contacts protein S5. The interaction surface between S4 and S5 is involved in control of translational fidelity.

One of the primary rRNA binding proteins, it binds directly to 16S rRNA where it nucleates assembly of the body of the 30S subunit. Functionally, with S5 and S12 plays an important role in translational accuracy. The polypeptide is Small ribosomal subunit protein uS4 (Bacteroides thetaiotaomicron (strain ATCC 29148 / DSM 2079 / JCM 5827 / CCUG 10774 / NCTC 10582 / VPI-5482 / E50)).